The following is a 562-amino-acid chain: Arginine--tRNA ligase (562 aa).

Positions 126 to 136 (ANPTGPLNVGH) match the 'HIGH' region motif.

The protein belongs to the class-I aminoacyl-tRNA synthetase family. Monomer.

The protein localises to the cytoplasm. It carries out the reaction tRNA(Arg) + L-arginine + ATP = L-arginyl-tRNA(Arg) + AMP + diphosphate. The polypeptide is Arginine--tRNA ligase (Salinibacter ruber (strain DSM 13855 / M31)).